Reading from the N-terminus, the 67-residue chain is Large ribosomal subunit protein bL32 (67 aa).

The span at 1-19 shows a compositional bias: basic residues; that stretch reads MAVPKRKMSRANTRMRRSQ. The segment at 1-22 is disordered; it reads MAVPKRKMSRANTRMRRSQWKA.

The protein belongs to the bacterial ribosomal protein bL32 family.

The sequence is that of Large ribosomal subunit protein bL32 from Kocuria rhizophila (strain ATCC 9341 / DSM 348 / NBRC 103217 / DC2201).